The sequence spans 849 residues: Serrate RNA effector molecule homolog A (849 aa).

Disordered regions lie at residues 1-90 (MADS…HGSD) and 276-409 (KREA…PRPL). Composition is skewed to basic and acidic residues over residues 8–73 (YDRR…RHDL), 276–306 (KREA…KPEN), and 314–342 (EKPV…ETRK). The segment covering 354 to 364 (SDDGSDSESDT) has biased composition (acidic residues). Over residues 381-405 (RAEETPKKEEDTEKQKEKQKEDTVK) the composition is skewed to basic and acidic residues.

It belongs to the ARS2 family. In terms of assembly, interacts ncbp1/cbp80.

The protein localises to the nucleus. The protein resides in the nucleoplasm. It localises to the cytoplasm. Functionally, acts as a mediator between the cap-binding complex (CBC) and the primary microRNAs (miRNAs) processing machinery during cell proliferation. Contributes to the stability and delivery of capped primary miRNA transcripts to the primary miRNA processing complex, thereby playing a role in RNA-mediated gene silencing (RNAi) by miRNAs. The sequence is that of Serrate RNA effector molecule homolog A (srrt-a) from Xenopus laevis (African clawed frog).